Here is a 172-residue protein sequence, read N- to C-terminus: C-phycocyanin beta chain (172 aa).

The residue at position 72 (Asn-72) is an N4-methylasparagine. (2R,3E)-phycocyanobilin contacts are provided by Cys-82 and Cys-153.

It belongs to the phycobiliprotein family. In terms of assembly, heterodimer of an alpha and a beta subunit, which further assembles into trimers and the trimers into hexamers. The basic functional unit of phycobiliproteins is a ring-shaped hexamer formed from two back-to-back trimers contacting via the alpha chain subunits. The trimers are composed of alpha/beta subunit heterodimers arranged around a three-fold axis of symmetry. The phycoerythrins also contain a gamma subunit which is located in the center of the hexamer. In terms of processing, contains two covalently linked bilin chromophores.

It localises to the plastid. The protein localises to the chloroplast thylakoid membrane. Light-harvesting photosynthetic bile pigment-protein from the phycobiliprotein complex (phycobilisome, PBS). Phycocyanin is the major phycobiliprotein in the PBS rod. This Porphyra purpurea (Red seaweed) protein is C-phycocyanin beta chain (cpcB).